Reading from the N-terminus, the 359-residue chain is 4-hydroxy-3-methylbut-2-en-1-yl diphosphate synthase (flavodoxin) (359 aa).

Residues cysteine 264, cysteine 267, cysteine 299, and glutamate 306 each contribute to the [4Fe-4S] cluster site.

This sequence belongs to the IspG family. [4Fe-4S] cluster serves as cofactor.

The catalysed reaction is (2E)-4-hydroxy-3-methylbut-2-enyl diphosphate + oxidized [flavodoxin] + H2O + 2 H(+) = 2-C-methyl-D-erythritol 2,4-cyclic diphosphate + reduced [flavodoxin]. It functions in the pathway isoprenoid biosynthesis; isopentenyl diphosphate biosynthesis via DXP pathway; isopentenyl diphosphate from 1-deoxy-D-xylulose 5-phosphate: step 5/6. Its function is as follows. Converts 2C-methyl-D-erythritol 2,4-cyclodiphosphate (ME-2,4cPP) into 1-hydroxy-2-methyl-2-(E)-butenyl 4-diphosphate. This Helicobacter pylori (strain G27) protein is 4-hydroxy-3-methylbut-2-en-1-yl diphosphate synthase (flavodoxin).